The following is a 203-amino-acid chain: MIGAEHITGVVLAGGRGSRMGGVDKGLQPYRGIPLALHALMRLQPQVGTTMINANRNLAAYESFGVPVWPDTDPDFAGPLSGFLVGLERAETPFVVTVPCDTPDFPDDLVARLAHALEAEDAELAMVRAPDSADAPGAPRPQPVFCLLRSTLLESLVRFVHAGGRKIDRWTAQHRCAMVDFDAAPFFNANTLDELRRLETQRV.

GTP is bound by residues 12–14 (LAG), K25, N53, D71, and D101. D101 is a binding site for Mg(2+).

This sequence belongs to the MobA family. Monomer. Requires Mg(2+) as cofactor.

The protein localises to the cytoplasm. It carries out the reaction Mo-molybdopterin + GTP + H(+) = Mo-molybdopterin guanine dinucleotide + diphosphate. In terms of biological role, transfers a GMP moiety from GTP to Mo-molybdopterin (Mo-MPT) cofactor (Moco or molybdenum cofactor) to form Mo-molybdopterin guanine dinucleotide (Mo-MGD) cofactor. This chain is Molybdenum cofactor guanylyltransferase, found in Methylibium petroleiphilum (strain ATCC BAA-1232 / LMG 22953 / PM1).